The sequence spans 598 residues: Aspartate--tRNA(Asp/Asn) ligase (598 aa).

Residue glutamate 177 participates in L-aspartate binding. An aspartate region spans residues 201 to 204 (QLFK). Arginine 223 is an L-aspartate binding site. Residues 223–225 (RDE) and glutamine 232 contribute to the ATP site. Position 456 (histidine 456) interacts with L-aspartate. Glutamate 493 contributes to the ATP binding site. Arginine 500 is an L-aspartate binding site. 545-548 (GLDR) contacts ATP.

Belongs to the class-II aminoacyl-tRNA synthetase family. Type 1 subfamily. In terms of assembly, homodimer.

The protein resides in the cytoplasm. It carries out the reaction tRNA(Asx) + L-aspartate + ATP = L-aspartyl-tRNA(Asx) + AMP + diphosphate. In terms of biological role, aspartyl-tRNA synthetase with relaxed tRNA specificity since it is able to aspartylate not only its cognate tRNA(Asp) but also tRNA(Asn). Reaction proceeds in two steps: L-aspartate is first activated by ATP to form Asp-AMP and then transferred to the acceptor end of tRNA(Asp/Asn). In Prochlorococcus marinus (strain AS9601), this protein is Aspartate--tRNA(Asp/Asn) ligase.